We begin with the raw amino-acid sequence, 196 residues long: UMP-CMP kinase (196 aa).

ATP is bound at residue Gly13–Thr18. Residues Ser33–Val63 form an NMP region. Residues Arg39, Lys61–Val63, and Gly93–Arg96 contribute to the a ribonucleoside 5'-phosphate site. Asn100 is a binding site for CMP. The interval Glu133–Asp143 is LID. Residue Arg134 participates in ATP binding. Positions 140 and 151 each coordinate a ribonucleoside 5'-phosphate. ATP is bound at residue Arg179.

It belongs to the adenylate kinase family. UMP-CMP kinase subfamily. Monomer. The cofactor is Mg(2+).

The protein localises to the nucleus. It is found in the cytoplasm. It catalyses the reaction CMP + ATP = CDP + ADP. The catalysed reaction is dCMP + ATP = dCDP + ADP. The enzyme catalyses UMP + ATP = UDP + ADP. It carries out the reaction a 2'-deoxyribonucleoside 5'-diphosphate + ATP = a 2'-deoxyribonucleoside 5'-triphosphate + ADP. It catalyses the reaction a ribonucleoside 5'-diphosphate + ATP = a ribonucleoside 5'-triphosphate + ADP. In terms of biological role, catalyzes the phosphorylation of pyrimidine nucleoside monophosphates at the expense of ATP. Plays an important role in de novo pyrimidine nucleotide biosynthesis. Has preference for UMP and CMP as phosphate acceptors. Also displays broad nucleoside diphosphate kinase activity. In Danio rerio (Zebrafish), this protein is UMP-CMP kinase (cmpk).